Consider the following 226-residue polypeptide: MNENLFASFITPTLMGLPIVLLIIMFPNLLFPSPTRLMNNRLVSFQQWLIQLVLKQMMAMHNPKGRTWSLMLISLIMFIGSTNLLGLLPHSFTPTTQLSMNLGMAIPLWAGAVITGFRHKTKASLAHFLPQGTPIPLIPMLIIIETISLFIQPMALAVRLTANITAGHLLMHLIGGATLVLTSISPPTAILTFIILVLLTMLEFAVALIQAYVFTLLVSLYLHDNT.

6 helical membrane passes run 6 to 26, 68 to 88, 97 to 117, 138 to 158, 164 to 184, and 189 to 209; these read FASF…IIMF, WSLM…LGLL, QLSM…ITGF, IPML…ALAV, ITAG…LTSI, and AILT…VALI.

Belongs to the ATPase A chain family. As to quaternary structure, component of the ATP synthase complex composed at least of ATP5F1A/subunit alpha, ATP5F1B/subunit beta, ATP5MC1/subunit c (homooctomer), MT-ATP6/subunit a, MT-ATP8/subunit 8, ATP5ME/subunit e, ATP5MF/subunit f, ATP5MG/subunit g, ATP5MK/subunit k, ATP5MJ/subunit j, ATP5F1C/subunit gamma, ATP5F1D/subunit delta, ATP5F1E/subunit epsilon, ATP5PF/subunit F6, ATP5PB/subunit b, ATP5PD/subunit d, ATP5PO/subunit OSCP. ATP synthase complex consists of a soluble F(1) head domain (subunits alpha(3) and beta(3)) - the catalytic core - and a membrane F(0) domain - the membrane proton channel (subunits c, a, 8, e, f, g, k and j). These two domains are linked by a central stalk (subunits gamma, delta, and epsilon) rotating inside the F1 region and a stationary peripheral stalk (subunits F6, b, d, and OSCP). Interacts with DNAJC30; interaction is direct.

It is found in the mitochondrion inner membrane. The enzyme catalyses H(+)(in) = H(+)(out). Subunit a, of the mitochondrial membrane ATP synthase complex (F(1)F(0) ATP synthase or Complex V) that produces ATP from ADP in the presence of a proton gradient across the membrane which is generated by electron transport complexes of the respiratory chain. ATP synthase complex consist of a soluble F(1) head domain - the catalytic core - and a membrane F(1) domain - the membrane proton channel. These two domains are linked by a central stalk rotating inside the F(1) region and a stationary peripheral stalk. During catalysis, ATP synthesis in the catalytic domain of F(1) is coupled via a rotary mechanism of the central stalk subunits to proton translocation. With the subunit c (ATP5MC1), forms the proton-conducting channel in the F(0) domain, that contains two crucial half-channels (inlet and outlet) that facilitate proton movement from the mitochondrial intermembrane space (IMS) into the matrix. Protons are taken up via the inlet half-channel and released through the outlet half-channel, following a Grotthuss mechanism. The sequence is that of ATP synthase F(0) complex subunit a from Ictidomys tridecemlineatus (Thirteen-lined ground squirrel).